The sequence spans 105 residues: MAKEAPAKTGLAVGLNKGHKTTARVVKPRVSRTKGHLSKRTAFVREVVKEVAGLAPYERRVIELLRNSKDKRARKLAKKRLGTFGRAKRKVDELQRVIAESRRAH.

A disordered region spans residues 1-20; the sequence is MAKEAPAKTGLAVGLNKGHK.

This sequence belongs to the eukaryotic ribosomal protein eL36 family.

The chain is Large ribosomal subunit protein eL36 (rpl36) from Trichoderma hamatum.